The following is a 453-amino-acid chain: Ribulose bisphosphate carboxylase large chain (453 aa).

Positions 1–2 (MS) are excised as a propeptide. At Pro-3 the chain carries N-acetylproline. An N6,N6,N6-trimethyllysine modification is found at Lys-14. Asn-123 and Thr-173 together coordinate substrate. The Proton acceptor role is filled by Lys-175. Lys-177 is a substrate binding site. Mg(2+)-binding residues include Lys-201, Asp-203, and Glu-204. An N6-carboxylysine modification is found at Lys-201. The Proton acceptor role is filled by His-294. Residues Arg-295, His-327, and Ser-379 each coordinate substrate.

It belongs to the RuBisCO large chain family. Type I subfamily. As to quaternary structure, heterohexadecamer of 8 large chains and 8 small chains; disulfide-linked. The disulfide link is formed within the large subunit homodimers. Mg(2+) is required as a cofactor. Post-translationally, the disulfide bond which can form in the large chain dimeric partners within the hexadecamer appears to be associated with oxidative stress and protein turnover.

The protein localises to the plastid. It is found in the chloroplast. The catalysed reaction is 2 (2R)-3-phosphoglycerate + 2 H(+) = D-ribulose 1,5-bisphosphate + CO2 + H2O. It carries out the reaction D-ribulose 1,5-bisphosphate + O2 = 2-phosphoglycolate + (2R)-3-phosphoglycerate + 2 H(+). Functionally, ruBisCO catalyzes two reactions: the carboxylation of D-ribulose 1,5-bisphosphate, the primary event in carbon dioxide fixation, as well as the oxidative fragmentation of the pentose substrate in the photorespiration process. Both reactions occur simultaneously and in competition at the same active site. This Galium parisiense (Wall bedstraw) protein is Ribulose bisphosphate carboxylase large chain.